Consider the following 159-residue polypeptide: 2-C-methyl-D-erythritol 2,4-cyclodiphosphate synthase (159 aa).

A divalent metal cation-binding residues include Asp8 and His10. 4-CDP-2-C-methyl-D-erythritol 2-phosphate contacts are provided by residues 8 to 10 (DVH) and 34 to 35 (HS). Position 42 (His42) interacts with a divalent metal cation. Residues 56-58 (DIG), 61-65 (FPDTD), 100-106 (AQAPKML), 132-135 (TTTE), Phe139, and Arg142 each bind 4-CDP-2-C-methyl-D-erythritol 2-phosphate.

This sequence belongs to the IspF family. Homotrimer. It depends on a divalent metal cation as a cofactor.

It catalyses the reaction 4-CDP-2-C-methyl-D-erythritol 2-phosphate = 2-C-methyl-D-erythritol 2,4-cyclic diphosphate + CMP. The protein operates within isoprenoid biosynthesis; isopentenyl diphosphate biosynthesis via DXP pathway; isopentenyl diphosphate from 1-deoxy-D-xylulose 5-phosphate: step 4/6. Its function is as follows. Involved in the biosynthesis of isopentenyl diphosphate (IPP) and dimethylallyl diphosphate (DMAPP), two major building blocks of isoprenoid compounds. Catalyzes the conversion of 4-diphosphocytidyl-2-C-methyl-D-erythritol 2-phosphate (CDP-ME2P) to 2-C-methyl-D-erythritol 2,4-cyclodiphosphate (ME-CPP) with a corresponding release of cytidine 5-monophosphate (CMP). The polypeptide is 2-C-methyl-D-erythritol 2,4-cyclodiphosphate synthase (Klebsiella pneumoniae (strain 342)).